A 599-amino-acid chain; its full sequence is UvrABC system protein C (599 aa).

The 79-residue stretch at 15–93 folds into the GIY-YIG domain; it reads EKPGCYQYFD…IKEYQPRYNV (79 aa). Residues 207–242 enclose the UVR domain; it reads HRLVRMYRDRMQVYSEGLRFEEAQICKERIELLERY.

The protein belongs to the UvrC family. In terms of assembly, interacts with UvrB in an incision complex.

The protein resides in the cytoplasm. In terms of biological role, the UvrABC repair system catalyzes the recognition and processing of DNA lesions. UvrC both incises the 5' and 3' sides of the lesion. The N-terminal half is responsible for the 3' incision and the C-terminal half is responsible for the 5' incision. The chain is UvrABC system protein C from Porphyromonas gingivalis (strain ATCC BAA-308 / W83).